Reading from the N-terminus, the 286-residue chain is MTLLDGKSLSVTIERDLTEQIAALVSQGVTPGLAVILVGNNPASCAYVQMKAKACKRVGIYSVTHEMPSKITQDELLSVIEILNNDPNIDGILVQLPLPAHIQTSKVLEAINPKKDVDGFHPFNIGRLSVNVDTFVPATPLGVMKLLESYHIDVRGKDVVIIGMSNIVGKPLMSLMLNAGASVSCCHILTRDVKQYTKNADIVCVAVGKVGLLSADMIKEGAVVVDVGINRLESGTLVGDVDFENVAPKSSFITPVPGGVGPMTIVSLLQNTYKAAMYRLEQRMRV.

NADP(+)-binding positions include 163–165 (GMS), Ile188, and Ile229.

It belongs to the tetrahydrofolate dehydrogenase/cyclohydrolase family. As to quaternary structure, homodimer.

It carries out the reaction (6R)-5,10-methylene-5,6,7,8-tetrahydrofolate + NADP(+) = (6R)-5,10-methenyltetrahydrofolate + NADPH. The catalysed reaction is (6R)-5,10-methenyltetrahydrofolate + H2O = (6R)-10-formyltetrahydrofolate + H(+). It functions in the pathway one-carbon metabolism; tetrahydrofolate interconversion. Catalyzes the oxidation of 5,10-methylenetetrahydrofolate to 5,10-methenyltetrahydrofolate and then the hydrolysis of 5,10-methenyltetrahydrofolate to 10-formyltetrahydrofolate. This is Bifunctional protein FolD from Helicobacter hepaticus (strain ATCC 51449 / 3B1).